A 211-amino-acid chain; its full sequence is Thiamine-phosphate synthase (211 aa).

Residues 35 to 39 (QLRDK) and N67 each bind 4-amino-2-methyl-5-(diphosphooxymethyl)pyrimidine. Mg(2+) contacts are provided by D68 and D87. S106 serves as a coordination point for 4-amino-2-methyl-5-(diphosphooxymethyl)pyrimidine. 132–134 (TGS) contacts 2-[(2R,5Z)-2-carboxy-4-methylthiazol-5(2H)-ylidene]ethyl phosphate. K135 provides a ligand contact to 4-amino-2-methyl-5-(diphosphooxymethyl)pyrimidine. Residues G163 and 183–184 (IS) contribute to the 2-[(2R,5Z)-2-carboxy-4-methylthiazol-5(2H)-ylidene]ethyl phosphate site.

Belongs to the thiamine-phosphate synthase family. Mg(2+) serves as cofactor.

It catalyses the reaction 2-[(2R,5Z)-2-carboxy-4-methylthiazol-5(2H)-ylidene]ethyl phosphate + 4-amino-2-methyl-5-(diphosphooxymethyl)pyrimidine + 2 H(+) = thiamine phosphate + CO2 + diphosphate. The enzyme catalyses 2-(2-carboxy-4-methylthiazol-5-yl)ethyl phosphate + 4-amino-2-methyl-5-(diphosphooxymethyl)pyrimidine + 2 H(+) = thiamine phosphate + CO2 + diphosphate. The catalysed reaction is 4-methyl-5-(2-phosphooxyethyl)-thiazole + 4-amino-2-methyl-5-(diphosphooxymethyl)pyrimidine + H(+) = thiamine phosphate + diphosphate. It participates in cofactor biosynthesis; thiamine diphosphate biosynthesis; thiamine phosphate from 4-amino-2-methyl-5-diphosphomethylpyrimidine and 4-methyl-5-(2-phosphoethyl)-thiazole: step 1/1. Its function is as follows. Condenses 4-methyl-5-(beta-hydroxyethyl)thiazole monophosphate (THZ-P) and 2-methyl-4-amino-5-hydroxymethyl pyrimidine pyrophosphate (HMP-PP) to form thiamine monophosphate (TMP). The chain is Thiamine-phosphate synthase from Methanoculleus marisnigri (strain ATCC 35101 / DSM 1498 / JR1).